Consider the following 120-residue polypeptide: DNA-directed RNA polymerase II subunit rpb11 (120 aa).

It belongs to the archaeal Rpo11/eukaryotic RPB11/RPC19 RNA polymerase subunit family. As to quaternary structure, component of the RNA polymerase II (Pol II) complex consisting of 12 subunits.

The protein resides in the nucleus. DNA-dependent RNA polymerase catalyzes the transcription of DNA into RNA using the four ribonucleoside triphosphates as substrates. Component of RNA polymerase II which synthesizes mRNA precursors and many functional non-coding RNAs. Pol II is the central component of the basal RNA polymerase II transcription machinery. It is composed of mobile elements that move relative to each other. RPB11 is part of the core element with the central large cleft. The polypeptide is DNA-directed RNA polymerase II subunit rpb11 (polr2j) (Dictyostelium discoideum (Social amoeba)).